The primary structure comprises 41 residues: Large ribosomal subunit protein bL36 (41 aa).

This sequence belongs to the bacterial ribosomal protein bL36 family.

The chain is Large ribosomal subunit protein bL36 from Methylobacterium nodulans (strain LMG 21967 / CNCM I-2342 / ORS 2060).